A 253-amino-acid polypeptide reads, in one-letter code: 5-oxoprolinase subunit A (253 aa).

This sequence belongs to the LamB/PxpA family. Forms a complex composed of PxpA, PxpB and PxpC.

The catalysed reaction is 5-oxo-L-proline + ATP + 2 H2O = L-glutamate + ADP + phosphate + H(+). Catalyzes the cleavage of 5-oxoproline to form L-glutamate coupled to the hydrolysis of ATP to ADP and inorganic phosphate. The polypeptide is 5-oxoprolinase subunit A (Chloroflexus aurantiacus (strain ATCC 29364 / DSM 637 / Y-400-fl)).